Here is a 306-residue protein sequence, read N- to C-terminus: Aspartate carbamoyltransferase catalytic subunit (306 aa).

The carbamoyl phosphate site is built by Arg-54 and Thr-55. Lys-83 lines the L-aspartate pocket. The carbamoyl phosphate site is built by Arg-104, His-132, and Gln-135. Arg-165 and Arg-227 together coordinate L-aspartate. Residues Leu-266 and Pro-267 each contribute to the carbamoyl phosphate site.

It belongs to the aspartate/ornithine carbamoyltransferase superfamily. ATCase family. As to quaternary structure, heterododecamer (2C3:3R2) of six catalytic PyrB chains organized as two trimers (C3), and six regulatory PyrI chains organized as three dimers (R2).

The enzyme catalyses carbamoyl phosphate + L-aspartate = N-carbamoyl-L-aspartate + phosphate + H(+). It participates in pyrimidine metabolism; UMP biosynthesis via de novo pathway; (S)-dihydroorotate from bicarbonate: step 2/3. In terms of biological role, catalyzes the condensation of carbamoyl phosphate and aspartate to form carbamoyl aspartate and inorganic phosphate, the committed step in the de novo pyrimidine nucleotide biosynthesis pathway. This is Aspartate carbamoyltransferase catalytic subunit from Clostridium novyi (strain NT).